The sequence spans 311 residues: Linearmycin resistance ATP-binding protein LnrL (311 aa).

The ABC transporter domain occupies 2–232; sequence LQAENIKKAY…LGGDTIIQLT (231 aa). An ATP-binding site is contributed by 34–41; that stretch reads GPNGAGKS.

It belongs to the ABC transporter superfamily. In terms of assembly, the complex is composed of two ATP-binding proteins (LnrL) and two transmembrane proteins (LnrM and LnrN).

Required for resistance to linearmycins, a family of antibiotic-specialized metabolites produced by some streptomycetes. Part of the ABC transporter complex LnrLMN that probably facilitates linearmycin removal from the membrane. Responsible for energy coupling to the transport system. Also mediates KinC-dependent biofilm morphology. This Bacillus subtilis (strain 168) protein is Linearmycin resistance ATP-binding protein LnrL.